The following is a 504-amino-acid chain: GTPase Obg (504 aa).

Residues 2–159 (SQFVDRVVLH…KDVTLELKSM (158 aa)) form the Obg domain. Residues 68–88 (AERGNNGAGDDRHGARGKDLT) form a disordered region. One can recognise an OBG-type G domain in the interval 160-340 (ADVGLVGFPS…LRFALMDIVR (181 aa)). Residues 166–173 (GFPSAGKS), 191–195 (FTTLA), 212–215 (DVPG), 292–295 (NKMD), and 321–323 (STV) contribute to the GTP site. Mg(2+)-binding residues include serine 173 and threonine 193. In terms of domain architecture, OCT spans 364-444 (KRKGRFADFE…IGGITFEWDP (81 aa)). Positions 449–481 (GVDQTPAYGRGKDRRLEQTDRVTAEQRKRASQA) are disordered. Residues 458 to 476 (RGKDRRLEQTDRVTAEQRK) are compositionally biased toward basic and acidic residues.

The protein belongs to the TRAFAC class OBG-HflX-like GTPase superfamily. OBG GTPase family. In terms of assembly, monomer. Mg(2+) is required as a cofactor.

It localises to the cytoplasm. An essential GTPase which binds GTP, GDP and possibly (p)ppGpp with moderate affinity, with high nucleotide exchange rates and a fairly low GTP hydrolysis rate. Plays a role in control of the cell cycle, stress response, ribosome biogenesis and in those bacteria that undergo differentiation, in morphogenesis control. The polypeptide is GTPase Obg (Corynebacterium urealyticum (strain ATCC 43042 / DSM 7109)).